The following is a 286-amino-acid chain: MSIISTKYLLQDAQANGYAVPAFNIHNAETIQAILEVCSEMRSPVILAGTPGTFKHIALEEIYALCSAYSTTYNMPLALHLDHHESLDDIRRKVHAGVRSAMIDGSHFPFAENVKLVKSVVDFCHSQDCSVEAELGRLGGVEDDMSVDAESAFLTDPQEAKRFVELTGVDSLAVAIGTAHGLYSKTPKIDFQRLAEIREVVDVPLVLHGASDVPDEFVRRTIELGVTKVNVATELKIAFAGAVKAWFAENPQGNDPRYYMRVGMDAMKEVVRNKINVCGSANRISA.

The active-site Proton donor is D82. Residues H83 and H180 each coordinate Zn(2+). Dihydroxyacetone phosphate is bound at residue G181. H208 contacts Zn(2+). Dihydroxyacetone phosphate-binding positions include 209–211 (GAS) and 230–233 (NVAT).

This sequence belongs to the class II fructose-bisphosphate aldolase family. TagBP aldolase KbaY subfamily. Homotetramer. Forms a complex with KbaZ. Zn(2+) serves as cofactor.

It catalyses the reaction D-tagatofuranose 1,6-bisphosphate = D-glyceraldehyde 3-phosphate + dihydroxyacetone phosphate. It functions in the pathway carbohydrate metabolism; D-tagatose 6-phosphate degradation; D-glyceraldehyde 3-phosphate and glycerone phosphate from D-tagatose 6-phosphate: step 2/2. Catalytic subunit of the tagatose-1,6-bisphosphate aldolase KbaYZ, which catalyzes the reversible aldol condensation of dihydroxyacetone phosphate (DHAP or glycerone-phosphate) with glyceraldehyde 3-phosphate (G3P) to produce tagatose 1,6-bisphosphate (TBP). Requires KbaZ subunit for full activity and stability. The sequence is that of D-tagatose-1,6-bisphosphate aldolase subunit KbaY from Escherichia coli O45:K1 (strain S88 / ExPEC).